The sequence spans 423 residues: Histidine--tRNA ligase (423 aa).

The protein belongs to the class-II aminoacyl-tRNA synthetase family. As to quaternary structure, homodimer.

It localises to the cytoplasm. The enzyme catalyses tRNA(His) + L-histidine + ATP = L-histidyl-tRNA(His) + AMP + diphosphate + H(+). This is Histidine--tRNA ligase from Haemophilus influenzae (strain PittEE).